Consider the following 92-residue polypeptide: Large ribosomal subunit protein bL25 (92 aa).

Belongs to the bacterial ribosomal protein bL25 family. As to quaternary structure, part of the 50S ribosomal subunit; part of the 5S rRNA/L5/L18/L25 subcomplex. Contacts the 5S rRNA. Binds to the 5S rRNA independently of L5 and L18.

Its function is as follows. This is one of the proteins that binds to the 5S RNA in the ribosome where it forms part of the central protuberance. The chain is Large ribosomal subunit protein bL25 from Aliivibrio salmonicida (strain LFI1238) (Vibrio salmonicida (strain LFI1238)).